The following is a 349-amino-acid chain: DNA repair protein XRCC3 (349 aa).

Met-1 is subject to N-acetylmethionine. 107-114 is a binding site for ATP; the sequence is GCSSAGKT.

The protein belongs to the RecA family. RAD51 subfamily. As to quaternary structure, interacts with RAD51C and RAD51. Part of the CX3 complex consisting of RAD51C and XRCC3; the complex has a ring-like structure arranged into a flat disc around a central channel; CX3 can interact with RAD51 in vitro. Forms a complex with FANCD2, BRCA2 and phosphorylated FANCG. Interacts with SWSAP1 and ZSWIM7; involved in homologous recombination repair. Interacts directly with PALB2 which may serve as a scaffold for a HR complex containing PALB2, BRCA2, RAD51C, RAD51 and XRCC3.

The protein resides in the nucleus. Its subcellular location is the cytoplasm. It is found in the perinuclear region. It localises to the mitochondrion matrix. Its function is as follows. Involved in the homologous recombination repair (HRR) pathway of double-stranded DNA, thought to repair chromosomal fragmentation, translocations and deletions. Part of the RAD21 paralog protein complex CX3 which acts in the BRCA1-BRCA2-dependent HR pathway. Upon DNA damage, CX3 acts downstream of RAD51 recruitment; the complex binds predominantly to the intersection of the four duplex arms of the Holliday junction (HJ) and to junctions of replication forks. Involved in HJ resolution and thus in processing HR intermediates late in the DNA repair process; the function may be linked to the CX3 complex and seems to involve GEN1 during mitotic cell cycle progression. Part of a PALB2-scaffolded HR complex containing BRCA2 and RAD51C and which is thought to play a role in DNA repair by HR. Plays a role in regulating mitochondrial DNA copy number under conditions of oxidative stress in the presence of RAD51 and RAD51C. The sequence is that of DNA repair protein XRCC3 (Xrcc3) from Mus musculus (Mouse).